A 284-amino-acid polypeptide reads, in one-letter code: Bifunctional protein FolD (284 aa).

Residues 165-167, Ser190, and Ile231 each bind NADP(+); that span reads GRS.

The protein belongs to the tetrahydrofolate dehydrogenase/cyclohydrolase family. Homodimer.

The catalysed reaction is (6R)-5,10-methylene-5,6,7,8-tetrahydrofolate + NADP(+) = (6R)-5,10-methenyltetrahydrofolate + NADPH. The enzyme catalyses (6R)-5,10-methenyltetrahydrofolate + H2O = (6R)-10-formyltetrahydrofolate + H(+). It functions in the pathway one-carbon metabolism; tetrahydrofolate interconversion. Its function is as follows. Catalyzes the oxidation of 5,10-methylenetetrahydrofolate to 5,10-methenyltetrahydrofolate and then the hydrolysis of 5,10-methenyltetrahydrofolate to 10-formyltetrahydrofolate. This is Bifunctional protein FolD from Clostridium kluyveri (strain ATCC 8527 / DSM 555 / NBRC 12016 / NCIMB 10680 / K1).